The chain runs to 415 residues: F-box protein At3g13820 (415 aa).

An F-box domain is found at 1–50; it reads MTTMSNLPAEVLEEILSRTPVTSLRTMRSTCKKWNNLSKKKIIPEAARKQ. Disordered stretches follow at residues 209 to 229 and 387 to 415; these read NDYD…EDDD and KQPK…KIIG. A compositionally biased stretch (acidic residues) spans 210–229; it reads DYDDQEDEEEEDDEEYEDDD. Basic residues predominate over residues 403-415; sequence NKNKKGRKIKIIG.

The protein is F-box protein At3g13820 of Arabidopsis thaliana (Mouse-ear cress).